The primary structure comprises 186 residues: Ribosome maturation factor RimP (186 aa).

It belongs to the RimP family.

It localises to the cytoplasm. Required for maturation of 30S ribosomal subunits. This Novosphingobium aromaticivorans (strain ATCC 700278 / DSM 12444 / CCUG 56034 / CIP 105152 / NBRC 16084 / F199) protein is Ribosome maturation factor RimP.